The primary structure comprises 346 residues: Protein RecA (346 aa).

67-74 contributes to the ATP binding site; it reads GPESSGKT.

This sequence belongs to the RecA family.

The protein resides in the cytoplasm. Can catalyze the hydrolysis of ATP in the presence of single-stranded DNA, the ATP-dependent uptake of single-stranded DNA by duplex DNA, and the ATP-dependent hybridization of homologous single-stranded DNAs. It interacts with LexA causing its activation and leading to its autocatalytic cleavage. The chain is Protein RecA from Saccharopolyspora erythraea (strain ATCC 11635 / DSM 40517 / JCM 4748 / NBRC 13426 / NCIMB 8594 / NRRL 2338).